Reading from the N-terminus, the 141-residue chain is Large ribosomal subunit protein uL16 (141 aa).

The protein belongs to the universal ribosomal protein uL16 family. As to quaternary structure, part of the 50S ribosomal subunit.

Its function is as follows. Binds 23S rRNA and is also seen to make contacts with the A and possibly P site tRNAs. The protein is Large ribosomal subunit protein uL16 of Hydrogenobaculum sp. (strain Y04AAS1).